A 278-amino-acid chain; its full sequence is S-formylglutathione hydrolase YeiG (278 aa).

Residues Ser-145, Asp-223, and His-256 each act as charge relay system in the active site.

It belongs to the esterase D family.

The enzyme catalyses S-formylglutathione + H2O = formate + glutathione + H(+). Functionally, serine hydrolase involved in the detoxification of formaldehyde. Hydrolyzes S-formylglutathione to glutathione and formate. The sequence is that of S-formylglutathione hydrolase YeiG (yeiG) from Escherichia coli O6:K15:H31 (strain 536 / UPEC).